The primary structure comprises 478 residues: Microfibrillar-associated protein 1 (478 aa).

Residues 1-20 (MSAATAAAAASGIQSTAGAI) are compositionally biased toward low complexity. Disordered regions lie at residues 1–276 (MSAA…RRAT) and 456–478 (NEHA…KKME). The segment covering 53–62 (SSEESDDDDF) has biased composition (acidic residues). Residues 107-128 (DDPRLRRLRQRPVDMEDMERER) show a composition bias toward basic and acidic residues. The segment covering 140–153 (IMESDSEDEEEDEG) has biased composition (acidic residues). Over residues 160–170 (RGTNKITLASE) the composition is skewed to polar residues. Residues 171–181 (SDTDAELSDTE) show a composition bias toward acidic residues. Residues 197 to 212 (QREEEVLQKEDEKQSE) show a composition bias toward basic and acidic residues. Residues 214–231 (SESESSEYEEETESEEDN) are compositionally biased toward acidic residues. The interaction with Prp38 stretch occupies residues 229–478 (EDNEPRLKPL…PTGSKRKKME (250 aa)). Residues 245-268 (RATIQEKEREAQKQKQLEAEAKRA) show a composition bias toward basic and acidic residues.

It belongs to the MFAP1 family. As to quaternary structure, component of the spliceosome B complex. Interacts (via C-terminus) with Prp38.

Its subcellular location is the nucleus. Its function is as follows. Required for pre-mRNA splicing. The sequence is that of Microfibrillar-associated protein 1 from Drosophila melanogaster (Fruit fly).